Reading from the N-terminus, the 160-residue chain is Keratin-associated protein 13-4 (160 aa).

A run of 4 repeats spans residues 41 to 50, 51 to 60, 61 to 70, and 77 to 86. Residues 41 to 86 are 4 X 10 AA approximate repeats; it reads CQLGSSLYRDCQKTCWEPASCQKSCYHPRTSMLCCPCQTTCSGSLG.

The protein belongs to the PMG family. As to quaternary structure, interacts with hair keratins.

Its function is as follows. In the hair cortex, hair keratin intermediate filaments are embedded in an interfilamentous matrix, consisting of hair keratin-associated proteins (KRTAP), which are essential for the formation of a rigid and resistant hair shaft through their extensive disulfide bond cross-linking with abundant cysteine residues of hair keratins. The matrix proteins include the high-sulfur and high-glycine-tyrosine keratins. This chain is Keratin-associated protein 13-4 (KRTAP13-4), found in Hylobates agilis (Agile gibbon).